Reading from the N-terminus, the 654-residue chain is 4-hydroxy-3-methylbut-2-en-1-yl diphosphate synthase (flavodoxin) (654 aa).

The [4Fe-4S] cluster site is built by Cys-557, Cys-560, Cys-591, and Glu-598.

This sequence belongs to the IspG family. It depends on [4Fe-4S] cluster as a cofactor.

The catalysed reaction is (2E)-4-hydroxy-3-methylbut-2-enyl diphosphate + oxidized [flavodoxin] + H2O + 2 H(+) = 2-C-methyl-D-erythritol 2,4-cyclic diphosphate + reduced [flavodoxin]. The protein operates within isoprenoid biosynthesis; isopentenyl diphosphate biosynthesis via DXP pathway; isopentenyl diphosphate from 1-deoxy-D-xylulose 5-phosphate: step 5/6. In terms of biological role, converts 2C-methyl-D-erythritol 2,4-cyclodiphosphate (ME-2,4cPP) into 1-hydroxy-2-methyl-2-(E)-butenyl 4-diphosphate. This chain is 4-hydroxy-3-methylbut-2-en-1-yl diphosphate synthase (flavodoxin), found in Protochlamydia amoebophila (strain UWE25).